A 108-amino-acid polypeptide reads, in one-letter code: Competence protein ComGC (108 aa).

Positions 1–13 (MKKMMTFLKKAKV) are cleaved as a signal peptide. The interval 14–39 (KAFTLVEMLVVLLIISVLFLLFVPNL) is may be involved in polymerization of ComGC. Position 16 is an N-methylphenylalanine (Phe-16). A helical membrane pass occupies residues 16-36 (FTLVEMLVVLLIISVLFLLFV).

Belongs to the ComGC family. As to quaternary structure, the transformation pili are flexible filaments, consisting mainly of the major pilin ComGC and smaller amounts of the minor pilins, including at least ComGD, ComGF and ComGG, and perhaps ComGE. Homodimer. Forms higher-order multimers. Interacts with ComGG; the interaction is probably direct. In terms of processing, undergoes proteolytic cleavage.

It is found in the cell membrane. It localises to the cell surface. The protein localises to the fimbrium. Its subcellular location is the secreted. Its function is as follows. Major component of the type IV-like pilus (T4P) that plays a role in transformation. Transformation pili are dynamically extended and retracted, perhaps thereby promoting DNA uptake and transformation. Required for transformation. Required for DNA binding. The sequence is that of Competence protein ComGC from Streptococcus pneumoniae (strain ATCC BAA-255 / R6).